We begin with the raw amino-acid sequence, 353 residues long: Delta-aminolevulinic acid dehydratase (353 aa).

Lys-221 serves as the catalytic Schiff-base intermediate with substrate. Positions 231 and 244 each coordinate 5-aminolevulinate. A Mg(2+)-binding site is contributed by Glu-260. Catalysis depends on Lys-275, which acts as the Schiff-base intermediate with substrate. 5-aminolevulinate-binding residues include Ser-301 and Tyr-340.

It belongs to the ALAD family. Homooctamer. Requires Mg(2+) as cofactor.

It carries out the reaction 2 5-aminolevulinate = porphobilinogen + 2 H2O + H(+). It participates in porphyrin-containing compound metabolism; protoporphyrin-IX biosynthesis; coproporphyrinogen-III from 5-aminolevulinate: step 1/4. Its function is as follows. Catalyzes an early step in the biosynthesis of tetrapyrroles. Binds two molecules of 5-aminolevulinate per subunit, each at a distinct site, and catalyzes their condensation to form porphobilinogen. Required for nodule development. This Bradyrhizobium diazoefficiens (strain JCM 10833 / BCRC 13528 / IAM 13628 / NBRC 14792 / USDA 110) protein is Delta-aminolevulinic acid dehydratase (hemB).